Consider the following 1044-residue polypeptide: DEMETER-like protein 3 (1044 aa).

Polar residues predominate over residues 1–15 (MLTDGSQHTYQNGET). Positions 1 to 107 (MLTDGSQHTY…KPRNPATTRL (107 aa)) are disordered. Residues 16–30 (KNSKEHERKCDESAH) show a composition bias toward basic and acidic residues. Residues 38 to 53 (THKKKEKKNSKEKHGI) are compositionally biased toward basic residues. Positions 54-66 (KHSESEHLQDDIS) are enriched in basic and acidic residues. Residues 71 to 89 (GKGRRRNSKGTPKKLRFNR) are compositionally biased toward basic residues. The segment at 348-445 (KVNLDPETIK…AFMSVAAKFP (98 aa)) is DEMETER. [4Fe-4S] cluster is bound by residues C678, C685, C688, and C694. A disordered region spans residues 1024–1044 (VRRLHTPPDERGPKFMSDDDI).

Belongs to the DNA glycosylase family. DEMETER subfamily. It depends on [4Fe-4S] cluster as a cofactor.

The protein localises to the nucleus. Functionally, potential transcriptional activator that may act by nicking the target promoter. Catalyzes the release of 5-methylcytosine (5-meC) from DNA by a glycosylase/lyase mechanism. The chain is DEMETER-like protein 3 (DML3) from Arabidopsis thaliana (Mouse-ear cress).